We begin with the raw amino-acid sequence, 140 residues long: Interleukin-4 (140 aa).

The signal sequence occupies residues 1-20 (MGLNPQLVVILLFFLECTRS). Disulfide bonds link Cys-25-Cys-107, Cys-47-Cys-87, and Cys-69-Cys-114. N-linked (GlcNAc...) asparagine glycans are attached at residues Asn-61, Asn-91, and Asn-117.

This sequence belongs to the IL-4/IL-13 family. In terms of assembly, interacts with IL4R. Interacts with IL13RA1.

It is found in the secreted. Its function is as follows. Cytokine secreted primarily by mast cells, T-cells, eosinophils, and basophils that plays a role in regulating antibody production, hematopoiesis and inflammation, and the development of effector T-cell responses. Induces the expression of class II MHC molecules on resting B-cells. Enhances both secretion and cell surface expression of IgE and IgG1. Also regulates the expression of the low affinity Fc receptor for IgE (CD23) on both lymphocytes and monocytes. Positively regulates IL31RA expression in macrophages. Stimulates autophagy in dendritic cells by interfering with mTORC1 signaling and through the induction of RUFY4. In addition, plays a critical role in higher functions of the normal brain, such as memory and learning. Upon binding to IL4, IL4R receptor dimerizes either with the common IL2R gamma chain/IL2RG to produce the type 1 signaling complex, located mainly on hematopoietic cells, or with the IL13RA1 to produce the type 2 complex, which is also expressed on nonhematopoietic cells. Engagement of both types of receptors initiates JAK3 and to a lower extend JAK1 phosphorylation leading to activation of the signal transducer and activator of transcription 6/STAT6. The protein is Interleukin-4 (Il4) of Mus musculus (Mouse).